A 212-amino-acid polypeptide reads, in one-letter code: Regulatory protein RecX (212 aa).

The protein belongs to the RecX family.

The protein resides in the cytoplasm. Its function is as follows. Modulates RecA activity. The sequence is that of Regulatory protein RecX from Clostridioides difficile (strain 630) (Peptoclostridium difficile).